A 166-amino-acid polypeptide reads, in one-letter code: 2-C-methyl-D-erythritol 2,4-cyclodiphosphate synthase (166 aa).

The a divalent metal cation site is built by Asp-15 and His-17. 4-CDP-2-C-methyl-D-erythritol 2-phosphate-binding positions include 15–17 (DVH) and 43–44 (HS). Residue His-51 coordinates a divalent metal cation. Residues 65 to 67 (DIG), 141 to 144 (TTNE), and Arg-151 contribute to the 4-CDP-2-C-methyl-D-erythritol 2-phosphate site.

This sequence belongs to the IspF family. As to quaternary structure, homotrimer. Requires a divalent metal cation as cofactor.

It carries out the reaction 4-CDP-2-C-methyl-D-erythritol 2-phosphate = 2-C-methyl-D-erythritol 2,4-cyclic diphosphate + CMP. It participates in isoprenoid biosynthesis; isopentenyl diphosphate biosynthesis via DXP pathway; isopentenyl diphosphate from 1-deoxy-D-xylulose 5-phosphate: step 4/6. In terms of biological role, involved in the biosynthesis of isopentenyl diphosphate (IPP) and dimethylallyl diphosphate (DMAPP), two major building blocks of isoprenoid compounds. Catalyzes the conversion of 4-diphosphocytidyl-2-C-methyl-D-erythritol 2-phosphate (CDP-ME2P) to 2-C-methyl-D-erythritol 2,4-cyclodiphosphate (ME-CPP) with a corresponding release of cytidine 5-monophosphate (CMP). The chain is 2-C-methyl-D-erythritol 2,4-cyclodiphosphate synthase from Synechococcus sp. (strain CC9311).